The following is a 365-amino-acid chain: Phospho-N-acetylmuramoyl-pentapeptide-transferase (365 aa).

Transmembrane regions (helical) follow at residues 2-22 (ISLI…TPLL), 51-71 (TLGG…SALY), 80-100 (PSWS…LGFI), 118-138 (GKFI…LILP), 167-187 (VAIV…TNAI), 196-216 (LAAG…FWEF), 234-254 (PLDL…FLWY), 256-276 (SNPA…GLFA), 277-297 (AMSI…LFVI), and 340-360 (FWMI…GDWV).

It belongs to the glycosyltransferase 4 family. MraY subfamily. Requires Mg(2+) as cofactor.

It localises to the cell membrane. The enzyme catalyses UDP-N-acetyl-alpha-D-muramoyl-L-alanyl-gamma-D-glutamyl-meso-2,6-diaminopimeloyl-D-alanyl-D-alanine + di-trans,octa-cis-undecaprenyl phosphate = di-trans,octa-cis-undecaprenyl diphospho-N-acetyl-alpha-D-muramoyl-L-alanyl-D-glutamyl-meso-2,6-diaminopimeloyl-D-alanyl-D-alanine + UMP. It functions in the pathway cell wall biogenesis; peptidoglycan biosynthesis. In terms of biological role, catalyzes the initial step of the lipid cycle reactions in the biosynthesis of the cell wall peptidoglycan: transfers peptidoglycan precursor phospho-MurNAc-pentapeptide from UDP-MurNAc-pentapeptide onto the lipid carrier undecaprenyl phosphate, yielding undecaprenyl-pyrophosphoryl-MurNAc-pentapeptide, known as lipid I. The polypeptide is Phospho-N-acetylmuramoyl-pentapeptide-transferase (Bifidobacterium adolescentis (strain ATCC 15703 / DSM 20083 / NCTC 11814 / E194a)).